The sequence spans 474 residues: tRNA-2-methylthio-N(6)-dimethylallyladenosine synthase (474 aa).

The MTTase N-terminal domain maps to 3 to 120; sequence KKLYIKTFGC…LPQMISTRQI (118 aa). [4Fe-4S] cluster contacts are provided by Cys-12, Cys-49, Cys-83, Cys-157, Cys-161, and Cys-164. A Radical SAM core domain is found at 143–382; sequence RTEGVTAFVS…ELQAQAISVR (240 aa). Residues 381 to 444 form the TRAM domain; the sequence is VRMVGTTQRV…SHTLRGENVR (64 aa).

The protein belongs to the methylthiotransferase family. MiaB subfamily. Monomer. The cofactor is [4Fe-4S] cluster.

It localises to the cytoplasm. The enzyme catalyses N(6)-dimethylallyladenosine(37) in tRNA + (sulfur carrier)-SH + AH2 + 2 S-adenosyl-L-methionine = 2-methylsulfanyl-N(6)-dimethylallyladenosine(37) in tRNA + (sulfur carrier)-H + 5'-deoxyadenosine + L-methionine + A + S-adenosyl-L-homocysteine + 2 H(+). Its function is as follows. Catalyzes the methylthiolation of N6-(dimethylallyl)adenosine (i(6)A), leading to the formation of 2-methylthio-N6-(dimethylallyl)adenosine (ms(2)i(6)A) at position 37 in tRNAs that read codons beginning with uridine. In Nitrosospira multiformis (strain ATCC 25196 / NCIMB 11849 / C 71), this protein is tRNA-2-methylthio-N(6)-dimethylallyladenosine synthase.